The primary structure comprises 848 residues: Oligopeptide transport ATP-binding protein OppF (848 aa).

Positions 13–785 (VKALSMMFKV…PVHPYTRSLI (773 aa)) constitute an ABC transporter domain. 47–54 (GESGSGKS) contacts ATP.

The protein belongs to the ABC transporter superfamily. In terms of assembly, the complex is composed of two ATP-binding proteins (OppD and OppF), two transmembrane proteins (OppB and OppC) and a solute-binding protein (OppA).

Its subcellular location is the cell membrane. The catalysed reaction is a [peptide](out) + ATP + H2O = a [peptide](in) + ADP + phosphate + H(+). In terms of biological role, part of the ABC transporter complex OppABCDF involved in the uptake of oligopeptides. Probably responsible for energy coupling to the transport system. The sequence is that of Oligopeptide transport ATP-binding protein OppF (oppF) from Mycoplasma genitalium (strain ATCC 33530 / DSM 19775 / NCTC 10195 / G37) (Mycoplasmoides genitalium).